Consider the following 66-residue polypeptide: uncharacterized protein (66 aa).

This is an uncharacterized protein from Methanocaldococcus jannaschii (strain ATCC 43067 / DSM 2661 / JAL-1 / JCM 10045 / NBRC 100440) (Methanococcus jannaschii).